The chain runs to 699 residues: Large T antigen (699 aa).

At methionine 1 the chain carries N-acetylmethionine; by host. Positions glutamate 12 to glycine 75 constitute a J domain. The LXCXE motif motif lies at leucine 105–glutamate 109. Phosphoserine; by host occurs at positions 114, 122, and 125. Residues aspartate 115 to proline 137 are disordered. Residue threonine 126 is modified to Phosphothreonine; by host. The Nuclear localization signal motif lies at proline 127–valine 134. A DNA-binding region (T-ag OBD) is located at residues proline 141 to glutamate 256. The segment at threonine 267–arginine 359 adopts a T-ag D1-type zinc-finger fold. Zn(2+) contacts are provided by cysteine 304, cysteine 307, histidine 315, and histidine 319. The region spanning lysine 402–serine 562 is the SF3 helicase domain. Glycine 428–threonine 435 provides a ligand contact to ATP. The interval glutamate 637–aspartate 678 is disordered. Residues histidine 643–proline 672 are compositionally biased toward polar residues. Phosphoserine; by host is present on serine 661. Residue lysine 691 is modified to N6-acetyllysine; by host. The residue at position 695 (threonine 695) is a Phosphothreonine; by host.

In terms of assembly, forms homohexamers in the presence of ATP. Interacts with host HDAC1. Interacts (via LXCXE domain) with host RB1; the interaction induces the aberrant dissociation of RB1-E2F1 complex thereby disrupting RB1's activity. Interacts (via LXCXE domain) with host pRB-related proteins RBL1 and RBL2. Interacts (via C-terminus) with host TOP1 and POLA1 allowing DNA replication. Interacts with host TP53, inhibiting TP53 binding to DNA. Interacts with host preinitiation complex components TBP, TFIIA and TFIID to regulate transcription initiation. Mg(2+) is required as a cofactor. Post-translationally, phosphorylated on both serine and threonine residues. Small t antigen inhibits the dephosphorylation by the AC form of PP2A. In terms of processing, O-Glycosylated near the C-terminal region. Acetylated by CBP in a TP53-dependent manner.

It is found in the host nucleus. The enzyme catalyses Couples ATP hydrolysis with the unwinding of duplex DNA by translocating in the 3'-5' direction.. The catalysed reaction is ATP + H2O = ADP + phosphate + H(+). Its function is as follows. Isoform large T antigen is a key early protein essential for both driving viral replication and inducing cellular transformation. Plays a role in viral genome replication by driving entry of quiescent cells into the cell cycle and by autoregulating the synthesis of viral early mRNA. Displays highly oncogenic activities by corrupting the host cellular checkpoint mechanisms that guard cell division and the transcription, replication, and repair of DNA. Participates in the modulation of cellular gene expression preceeding viral DNA replication. This step involves binding to host key cell cycle regulators retinoblastoma protein RB1/pRb and TP53. Induces the disassembly of host E2F1 transcription factors from RB1, thus promoting transcriptional activation of E2F1-regulated S-phase genes. Inhibits host TP53 binding to DNA, abrogating the ability of TP53 to stimulate gene expression. Plays the role of a TFIID-associated factor (TAF) in transcription initiation for all three RNA polymerases, by stabilizing the TBP-TFIIA complex on promoters. Initiates viral DNA replication and unwinding via interactions with the viral origin of replication. Binds two adjacent sites in the SV40 origin. The replication fork movement is facilitated by Large T antigen helicase activity. Has processive 3'-5' DNA helicase activity which requires a short 3' single-stranded region and ATP. Activates the transcription of viral late mRNA, through host TBP and TFIIA stabilization. Interferes with histone deacetylation mediated by HDAC1, leading to activation of transcription. In Papio hamadryas ursinus (Chacma baboon), this protein is Large T antigen.